The chain runs to 284 residues: Bifunctional protein FolD (284 aa).

NADP(+) is bound by residues 165 to 167, S190, and V231; that span reads GRS.

This sequence belongs to the tetrahydrofolate dehydrogenase/cyclohydrolase family. Homodimer.

The catalysed reaction is (6R)-5,10-methylene-5,6,7,8-tetrahydrofolate + NADP(+) = (6R)-5,10-methenyltetrahydrofolate + NADPH. The enzyme catalyses (6R)-5,10-methenyltetrahydrofolate + H2O = (6R)-10-formyltetrahydrofolate + H(+). The protein operates within one-carbon metabolism; tetrahydrofolate interconversion. Functionally, catalyzes the oxidation of 5,10-methylenetetrahydrofolate to 5,10-methenyltetrahydrofolate and then the hydrolysis of 5,10-methenyltetrahydrofolate to 10-formyltetrahydrofolate. In Geobacillus thermodenitrificans (strain NG80-2), this protein is Bifunctional protein FolD.